A 153-amino-acid polypeptide reads, in one-letter code: SsrA-binding protein (153 aa).

Belongs to the SmpB family.

It localises to the cytoplasm. Required for rescue of stalled ribosomes mediated by trans-translation. Binds to transfer-messenger RNA (tmRNA), required for stable association of tmRNA with ribosomes. tmRNA and SmpB together mimic tRNA shape, replacing the anticodon stem-loop with SmpB. tmRNA is encoded by the ssrA gene; the 2 termini fold to resemble tRNA(Ala) and it encodes a 'tag peptide', a short internal open reading frame. During trans-translation Ala-aminoacylated tmRNA acts like a tRNA, entering the A-site of stalled ribosomes, displacing the stalled mRNA. The ribosome then switches to translate the ORF on the tmRNA; the nascent peptide is terminated with the 'tag peptide' encoded by the tmRNA and targeted for degradation. The ribosome is freed to recommence translation, which seems to be the essential function of trans-translation. In Macrococcus caseolyticus (strain JCSC5402) (Macrococcoides caseolyticum), this protein is SsrA-binding protein.